The primary structure comprises 732 residues: uncharacterized protein (732 aa).

A TR mART core domain is found at 163-390 (YYTINELNYL…FGIVAKKKYE (228 aa)). Active-site residues include arginine 285, serine 309, and glutamate 354.

This is an uncharacterized protein from Acanthamoeba polyphaga mimivirus (APMV).